The primary structure comprises 374 residues: uncharacterized protein (374 aa).

The tract at residues 1–46 is disordered; sequence MVNEEEKDLTAEGDSNNTGVSPDSIKNKTLDFYPKEKTTERKTRSR. Over residues 25–46 the composition is skewed to basic and acidic residues; that stretch reads IKNKTLDFYPKEKTTERKTRSR. The next 6 helical transmembrane spans lie at 70–90, 127–147, 153–173, 199–219, 242–262, and 312–332; these read YAYIIFAAFLGMASYDYFIAA, WVFYFVFNIPLFIFGVIKIGI, TIVYIGLQNGFHFAFAYIPVI, IWLFVFAAVAGILNGIAYGLV, ISIANYNRIVNYIIIVVMLAI, and YFFGPALFASYLFVVVQAITI.

This sequence to M.genitalium MG432 and MG443.

It is found in the cell membrane. This is an uncharacterized protein from Spiroplasma citri.